The primary structure comprises 290 residues: Zinc finger AN1 and C2H2 domain-containing stress-associated protein 16 (290 aa).

2 AN1-type zinc fingers span residues 7-55 and 95-145; these read PNLG…QKDV and VTKK…KPES. 16 residues coordinate Zn(2+): C13, C18, C28, C31, C36, H39, H45, C47, C101, C106, C118, C121, C126, H129, H135, and C137. 2 C2H2-type zinc fingers span residues 224–247 and 261–284; these read EQCVQCPARFSTVGALIEHCEKSH and DVCPKCSKAFRDPVLLVEHVERDH.

May be involved in environmental stress response. The protein is Zinc finger AN1 and C2H2 domain-containing stress-associated protein 16 (SAP16) of Oryza sativa subsp. japonica (Rice).